Consider the following 337-residue polypeptide: MQRPRVLSGVQPTGALHLGNWLGAIRNWVDLQSSHDTYVCVVDLHAITVPHDPERLAEESLSTAALYLACGMDPDLCSIFVQSQVSAHSELCWLLNCVTPLNWLERMIQFKEKSVKQGDNVSVGLLDYPVLMAADILLYDADLVPVGEDQKQHLELARDIAQQRINARFGSEEKPVLKVPDPLIIKEGARVMSLSDGRSKMSKSDPNEGSRITLLDPPELITKKIKRAKTDPQMGLQFGNPDRPEADNLLGIYAILSGRGRDAAAQECAEMGWGTFKPLLADATVSALEPIQHRYQQLMGDRIELIRVLDQGRTRAEETAQATLQRVRQALGFLIAS.

Residues 11–13 (QPT) and 19–20 (GN) each bind ATP. Positions 12–20 (PTGALHLGN) match the 'HIGH' region motif. Asp-135 is an L-tryptophan binding site. Residues 147-149 (GED), Val-191, and 200-204 (KMSKS) each bind ATP. The short motif at 200 to 204 (KMSKS) is the 'KMSKS' region element.

The protein belongs to the class-I aminoacyl-tRNA synthetase family. Homodimer.

The protein resides in the cytoplasm. It carries out the reaction tRNA(Trp) + L-tryptophan + ATP = L-tryptophyl-tRNA(Trp) + AMP + diphosphate + H(+). Its function is as follows. Catalyzes the attachment of tryptophan to tRNA(Trp). This is Tryptophan--tRNA ligase from Prochlorococcus marinus (strain MIT 9313).